The following is a 35-amino-acid chain: uncharacterized protein (35 aa).

Positions 1–25 (MTERKLLQLLRRPFISLSLFTALRA) are cleaved as a signal peptide.

This is an uncharacterized protein from Saccharomyces cerevisiae (strain ATCC 204508 / S288c) (Baker's yeast).